We begin with the raw amino-acid sequence, 41 residues long: Large ribosomal subunit protein bL36 (41 aa).

Belongs to the bacterial ribosomal protein bL36 family.

The sequence is that of Large ribosomal subunit protein bL36 from Xanthomonas axonopodis pv. citri (strain 306).